Reading from the N-terminus, the 185-residue chain is Protein-lysine palmitoyltransferase CyaC (185 aa).

Catalysis depends on residues His33 and Asp102.

The protein belongs to the RTX toxin acyltransferase family. In terms of assembly, homodimer.

Its subcellular location is the cytoplasm. It carries out the reaction hexadecanoyl-[ACP] + L-lysyl-[protein] = N(6)-hexadecanoyl-L-lysyl-[protein] + holo-[ACP] + H(+). The catalysed reaction is (9Z)-hexadecenoyl-[ACP] + L-lysyl-[protein] = N(6)-[(9Z)-hexadecenoyl]-L-lysyl-[protein] + holo-[ACP] + H(+). Its function is as follows. Protein-lysine palmitoyltransferase that catalyzes palmitoylation of the protoxin (CyaA) at two internal lysine residues, thereby converting it to the active toxin. In Bordetella bronchiseptica (strain ATCC BAA-588 / NCTC 13252 / RB50) (Alcaligenes bronchisepticus), this protein is Protein-lysine palmitoyltransferase CyaC.